The following is a 461-amino-acid chain: Argininosuccinate lyase (461 aa).

This sequence belongs to the lyase 1 family. Argininosuccinate lyase subfamily.

It is found in the cytoplasm. It catalyses the reaction 2-(N(omega)-L-arginino)succinate = fumarate + L-arginine. Its pathway is amino-acid biosynthesis; L-arginine biosynthesis; L-arginine from L-ornithine and carbamoyl phosphate: step 3/3. The protein is Argininosuccinate lyase of Shewanella piezotolerans (strain WP3 / JCM 13877).